A 179-amino-acid chain; its full sequence is Natural killer cells antigen CD94 (179 aa).

At 1 to 10 the chain is on the cytoplasmic side; that stretch reads MAVFKTTLWR. Residues 11 to 31 traverse the membrane as a helical; Signal-anchor for type II membrane protein segment; sequence LISGTLGIICLSLMATLGILL. The Extracellular portion of the chain corresponds to 32–179; sequence KNSFTKLSVE…NRYICKQQLI (148 aa). 2 disulfide bridges follow: Cys-58–Cys-70 and Cys-61–Cys-72. The 108-residue stretch at 68 to 175 folds into the C-type lectin domain; the sequence is YRCNCYFISS…CETKNRYICK (108 aa). Asn-83 and Asn-132 each carry an N-linked (GlcNAc...) asparagine glycan. 2 cysteine pairs are disulfide-bonded: Cys-89/Cys-174 and Cys-152/Cys-166.

Can form disulfide-bonded heterodimer with NKG2 family members KLRC1 and KLRC2. KLRD1-KLRC1 heterodimer interacts with peptide-bound MHC-E-B2M heterotrimeric complex. KLRD1 plays a prominent role in directly interacting with MHC-E. KLRD1-KLRC1 interacts with much higher affinity with peptide-bound MHC-E-B2M than KLRD1-KLRC2. Interacts with the adapter protein TYROBP/DAP12; this interaction is required for cell surface expression and cell activation. In terms of tissue distribution, natural killer cells.

It localises to the cell membrane. Functionally, immune receptor involved in self-nonself discrimination. In complex with KLRC1 or KLRC2 on cytotoxic and regulatory lymphocyte subsets, recognizes non-classical major histocompatibility (MHC) class Ib molecule MHC-E loaded with self-peptides derived from the signal sequence of classical MHC class Ia and non-classical MHC class Ib molecules. Enables cytotoxic cells to monitor the expression of MHC class I molecules in healthy cells and to tolerate self. Primarily functions as a ligand binding subunit as it lacks the capacity to signal. In terms of biological role, KLRD1-KLRC1 acts as an immune inhibitory receptor. Key inhibitory receptor on natural killer (NK) cells that regulates their activation and effector functions. Dominantly counteracts T cell receptor signaling on a subset of memory/effector CD8-positive T cells as part of an antigen-driven response to avoid autoimmunity. On intraepithelial CD8-positive gamma-delta regulatory T cells triggers TGFB1 secretion, which in turn limits the cytotoxic programming of intraepithelial CD8-positive alpha-beta T cells, distinguishing harmless from pathogenic antigens. In MHC-E-rich tumor microenvironment, acts as an immune inhibitory checkpoint and may contribute to progressive loss of effector functions of NK cells and tumor-specific T cells, a state known as cell exhaustion. Upon MHC-E-peptide binding, transmits intracellular signals through KLRC1 immunoreceptor tyrosine-based inhibition motifs (ITIMs) by recruiting INPP5D/SHIP-1 and INPPL1/SHIP-2 tyrosine phosphatases to ITIMs, and ultimately opposing signals transmitted by activating receptors through dephosphorylation of proximal signaling molecules. KLRD1-KLRC2 acts as an immune activating receptor. On cytotoxic lymphocyte subsets recognizes MHC-E loaded with signal sequence-derived peptides from non-classical MHC class Ib MHC-G molecules, likely playing a role in the generation and effector functions of adaptive NK cells and in maternal-fetal tolerance during pregnancy. Regulates the effector functions of terminally differentiated cytotoxic lymphocyte subsets, and in particular may play a role in adaptive NK cell response to viral infection. Upon MHC-E-peptide binding, transmits intracellular signals via the adapter protein TYROBP/DAP12, triggering the phosphorylation of proximal signaling molecules and cell activation. This Macaca mulatta (Rhesus macaque) protein is Natural killer cells antigen CD94 (KLRD1).